The primary structure comprises 224 residues: Elongation factor Ts (224 aa).

The involved in Mg(2+) ion dislocation from EF-Tu stretch occupies residues 81–84; that stretch reads TDFV.

The protein belongs to the EF-Ts family.

The protein localises to the cytoplasm. Its function is as follows. Associates with the EF-Tu.GDP complex and induces the exchange of GDP to GTP. It remains bound to the aminoacyl-tRNA.EF-Tu.GTP complex up to the GTP hydrolysis stage on the ribosome. This Finegoldia magna (strain ATCC 29328 / DSM 20472 / WAL 2508) (Peptostreptococcus magnus) protein is Elongation factor Ts.